We begin with the raw amino-acid sequence, 342 residues long: Holliday junction branch migration complex subunit RuvB (342 aa).

The interval 1-179 (MTNILSPEKI…FGIPMRLNFY (179 aa)) is large ATPase domain (RuvB-L). ATP contacts are provided by residues Ile18, Arg19, Gly60, Lys63, Thr64, Thr65, 126–128 (EDF), Arg169, Tyr179, and Arg216. Thr64 provides a ligand contact to Mg(2+). The small ATPAse domain (RuvB-S) stretch occupies residues 180 to 250 (NTEELKKVLN…ISDFGLNRLE (71 aa)). Residues 253-342 (HIGLDSNDYR…HQFNIFNENE (90 aa)) are head domain (RuvB-H). DNA contacts are provided by Arg289, Arg308, and Arg313.

Belongs to the RuvB family. Homohexamer. Forms an RuvA(8)-RuvB(12)-Holliday junction (HJ) complex. HJ DNA is sandwiched between 2 RuvA tetramers; dsDNA enters through RuvA and exits via RuvB. An RuvB hexamer assembles on each DNA strand where it exits the tetramer. Each RuvB hexamer is contacted by two RuvA subunits (via domain III) on 2 adjacent RuvB subunits; this complex drives branch migration. In the full resolvosome a probable DNA-RuvA(4)-RuvB(12)-RuvC(2) complex forms which resolves the HJ.

The protein resides in the cytoplasm. It catalyses the reaction ATP + H2O = ADP + phosphate + H(+). Its function is as follows. The RuvA-RuvB-RuvC complex processes Holliday junction (HJ) DNA during genetic recombination and DNA repair, while the RuvA-RuvB complex plays an important role in the rescue of blocked DNA replication forks via replication fork reversal (RFR). RuvA specifically binds to HJ cruciform DNA, conferring on it an open structure. The RuvB hexamer acts as an ATP-dependent pump, pulling dsDNA into and through the RuvAB complex. RuvB forms 2 homohexamers on either side of HJ DNA bound by 1 or 2 RuvA tetramers; 4 subunits per hexamer contact DNA at a time. Coordinated motions by a converter formed by DNA-disengaged RuvB subunits stimulates ATP hydrolysis and nucleotide exchange. Immobilization of the converter enables RuvB to convert the ATP-contained energy into a lever motion, pulling 2 nucleotides of DNA out of the RuvA tetramer per ATP hydrolyzed, thus driving DNA branch migration. The RuvB motors rotate together with the DNA substrate, which together with the progressing nucleotide cycle form the mechanistic basis for DNA recombination by continuous HJ branch migration. Branch migration allows RuvC to scan DNA until it finds its consensus sequence, where it cleaves and resolves cruciform DNA. The chain is Holliday junction branch migration complex subunit RuvB from Rickettsia felis (strain ATCC VR-1525 / URRWXCal2) (Rickettsia azadi).